We begin with the raw amino-acid sequence, 428 residues long: Acetyltransferase sirH (428 aa).

Residue N8 is glycosylated (N-linked (GlcNAc...) asparagine). A run of 6 helical transmembrane segments spans residues 33–53 (LLTP…PGPL), 55–75 (VIVG…HWVS), 78–98 (AFFM…LMFV), 305–325 (LYVG…LIPS), 329–349 (GWGM…EDIL), and 366–386 (FLGY…PVGF).

The protein belongs to the wax synthase family.

Its subcellular location is the membrane. Its pathway is polyketide biosynthesis. In terms of biological role, acetyltransferase; part of the gene cluster that mediates the biosynthesis of asperlin, a polyketide showing anti-inflammatory, antitumor and antibiotic activities. The first step of the asperlin biosynthesis is the production of the intermediate 2,4,6-octatrienoic acid by the highly redusing polyketide synthase alnA with cleavage of the PKS product by the esterase alnB. 2,4,6-octatrienoic acid is further converted to asperlin via several steps involving the remaining enzymes from the cluster. The sequence is that of Acetyltransferase sirH from Emericella nidulans (strain FGSC A4 / ATCC 38163 / CBS 112.46 / NRRL 194 / M139) (Aspergillus nidulans).